Consider the following 93-residue polypeptide: Small ribosomal subunit protein uS19 (93 aa).

It belongs to the universal ribosomal protein uS19 family.

Its function is as follows. Protein S19 forms a complex with S13 that binds strongly to the 16S ribosomal RNA. This Ehrlichia chaffeensis (strain ATCC CRL-10679 / Arkansas) protein is Small ribosomal subunit protein uS19.